Here is a 288-residue protein sequence, read N- to C-terminus: UTP--glucose-1-phosphate uridylyltransferase (288 aa).

Belongs to the UDPGP type 2 family.

It catalyses the reaction alpha-D-glucose 1-phosphate + UTP + H(+) = UDP-alpha-D-glucose + diphosphate. Its pathway is glycolipid metabolism; diglucosyl-diacylglycerol biosynthesis. Functionally, catalyzes the formation of UDP-glucose from glucose-1-phosphate and UTP. This is an intermediate step in the biosynthesis of diglucosyl-diacylglycerol (Glc2-DAG), i.e. the predominant glycolipid found in the S.aureus membrane, which is also used as a membrane anchor for lipoteichoic acid (LTA). In Staphylococcus aureus (strain bovine RF122 / ET3-1), this protein is UTP--glucose-1-phosphate uridylyltransferase (gtaB).